The primary structure comprises 335 residues: Mitochondrial uncoupling protein 4C (335 aa).

3 Solcar repeats span residues 34-125, 137-229, and 238-329; these read RNLF…FRRP, LKIY…SKRT, and EGLP…LRQW. The next 6 helical transmembrane spans lie at 40–57, 100–118, 138–157, 204–223, 244–264, and 304–323; these read YVNTFIGANLAESCVFPL, GFSAMVTRNFIFNSLRVVL, KIYMALGCSFTAGCIAQALA, GVGPSCMRACLMTTGDVGSY, FVSSMCAGLTASVLSTPADVI, and GLMPTWFRLGPFSVLFWLSV.

It belongs to the mitochondrial carrier (TC 2.A.29) family.

Its subcellular location is the mitochondrion inner membrane. In terms of biological role, mitochondrial protein that is likely to be responsible for thermogenic respiration. Likely to function in mitochondrial uncoupling i.e. creating mitochondrial proton leaks across the inner mitochondrial membrane and can therefore dissipate the mitochondrial proton gradient and convert the energy of substrate oxidation into heat instead of ATP. Involved in cold tolerance, it is required for development to the adult stage at low temperatures. The polypeptide is Mitochondrial uncoupling protein 4C (Drosophila melanogaster (Fruit fly)).